A 221-amino-acid chain; its full sequence is Small ribosomal subunit protein uS2 (221 aa).

Belongs to the universal ribosomal protein uS2 family.

The sequence is that of Small ribosomal subunit protein uS2 from Methanococcus maripaludis (strain C6 / ATCC BAA-1332).